The primary structure comprises 95 residues: Protein RALF-like 16 (95 aa).

A signal peptide spans 1–29 (MVAYEKSPIVFLFATMMLVMFLFCGSGEA). 2 disulfide bridges follow: cysteine 45-cysteine 53 and cysteine 65-cysteine 71.

It belongs to the plant rapid alkalinization factor (RALF) family.

The protein resides in the secreted. In terms of biological role, cell signaling peptide that may regulate plant stress, growth, and development. Mediates a rapid alkalinization of extracellular space by mediating a transient increase in the cytoplasmic Ca(2+) concentration leading to a calcium-dependent signaling events through a cell surface receptor and a concomitant activation of some intracellular mitogen-activated protein kinases. The sequence is that of Protein RALF-like 16 (RALFL16) from Arabidopsis thaliana (Mouse-ear cress).